Reading from the N-terminus, the 443-residue chain is Tubulin beta-1 chain (443 aa).

Residues Gln-11, Glu-69, Ser-138, Gly-142, Thr-143, Gly-144, Asn-204, and Asn-226 each contribute to the GTP site. Residue Glu-69 participates in Mg(2+) binding. A disordered region spans residues 424 to 443 (QYQDATAEREGEYEEDYDEA). Acidic residues predominate over residues 434–443 (GEYEEDYDEA).

Belongs to the tubulin family. Dimer of alpha and beta chains. A typical microtubule is a hollow water-filled tube with an outer diameter of 25 nm and an inner diameter of 15 nM. Alpha-beta heterodimers associate head-to-tail to form protofilaments running lengthwise along the microtubule wall with the beta-tubulin subunit facing the microtubule plus end conferring a structural polarity. Microtubules usually have 13 protofilaments but different protofilament numbers can be found in some organisms and specialized cells. Mg(2+) is required as a cofactor.

It is found in the cytoplasm. Its subcellular location is the cytoskeleton. Functionally, tubulin is the major constituent of microtubules, a cylinder consisting of laterally associated linear protofilaments composed of alpha- and beta-tubulin heterodimers. Microtubules grow by the addition of GTP-tubulin dimers to the microtubule end, where a stabilizing cap forms. Below the cap, tubulin dimers are in GDP-bound state, owing to GTPase activity of alpha-tubulin. This Anemia phyllitidis (Fern) protein is Tubulin beta-1 chain (TUBB1).